The sequence spans 132 residues: Antimicrobial protein Ace-AMP1 (132 aa).

The N-terminal stretch at 1–27 (MVRVVSLLAASTFILLIMIISSPYANS) is a signal peptide. Intrachain disulfides connect Cys31-Cys76, Cys41-Cys54, Cys55-Cys100, and Cys74-Cys116.

It belongs to the plant LTP family. Highly divergent. In terms of assembly, monomer.

Antifungal and antibacterial activity against the Gram-positive bacteria B.megaterium and S.lutea. This is Antimicrobial protein Ace-AMP1 from Allium cepa (Onion).